We begin with the raw amino-acid sequence, 210 residues long: N-(5'-phosphoribosyl)anthranilate isomerase (210 aa).

It belongs to the TrpF family.

The enzyme catalyses N-(5-phospho-beta-D-ribosyl)anthranilate = 1-(2-carboxyphenylamino)-1-deoxy-D-ribulose 5-phosphate. The protein operates within amino-acid biosynthesis; L-tryptophan biosynthesis; L-tryptophan from chorismate: step 3/5. The chain is N-(5'-phosphoribosyl)anthranilate isomerase from Trichormus variabilis (strain ATCC 29413 / PCC 7937) (Anabaena variabilis).